We begin with the raw amino-acid sequence, 923 residues long: Glucosidase 2 subunit alpha (923 aa).

The N-terminal stretch at 1–25 (MRYHGICWFIFQAAIIFAIFGSCQG) is a signal peptide. N262 carries an N-linked (GlcNAc...) asparagine glycan. Residue D524 is the Nucleophile of the active site. E527 is a catalytic residue. N-linked (GlcNAc...) asparagine glycosylation is present at N563. D600 (proton donor) is an active-site residue. N-linked (GlcNAc...) asparagine glycosylation is present at N822.

Belongs to the glycosyl hydrolase 31 family. Heterodimer of a catalytic subunit alpha (gls2) and a subunit beta (gtb1).

The protein localises to the endoplasmic reticulum. It carries out the reaction N(4)-(alpha-D-Glc-(1-&gt;3)-alpha-D-Man-(1-&gt;2)-alpha-D-Man-(1-&gt;2)-alpha-D-Man-(1-&gt;3)-[alpha-D-Man-(1-&gt;2)-alpha-D-Man-(1-&gt;3)-[alpha-D-Man-(1-&gt;2)-alpha-D-Man-(1-&gt;6)]-alpha-D-Man-(1-&gt;6)]-beta-D-Man-(1-&gt;4)-beta-D-GlcNAc-(1-&gt;4)-beta-D-GlcNAc)-L-asparaginyl-[protein] + H2O = N(4)-(alpha-D-Man-(1-&gt;2)-alpha-D-Man-(1-&gt;2)-alpha-D-Man-(1-&gt;3)-[alpha-D-Man-(1-&gt;2)-alpha-D-Man-(1-&gt;3)-[alpha-D-Man-(1-&gt;2)-alpha-D-Man-(1-&gt;6)]-alpha-D-Man-(1-&gt;6)]-beta-D-Man-(1-&gt;4)-beta-D-GlcNAc-(1-&gt;4)-beta-D-GlcNAc)-L-asparaginyl-[protein] (N-glucan mannose isomer 9A1,2,3B1,2,3) + beta-D-glucose. The catalysed reaction is N(4)-(alpha-D-Glc-(1-&gt;3)-alpha-D-Glc-(1-&gt;3)-alpha-D-Man-(1-&gt;2)-alpha-D-Man-(1-&gt;2)-alpha-D-Man-(1-&gt;3)-[alpha-D-Man-(1-&gt;2)-alpha-D-Man-(1-&gt;3)-[alpha-D-Man-(1-&gt;2)-alpha-D-Man-(1-&gt;6)]-alpha-D-Man-(1-&gt;6)]-beta-D-Man-(1-&gt;4)-beta-D-GlcNAc-(1-&gt;4)-beta-D-GlcNAc)-L-asparaginyl-[protein] + H2O = N(4)-(alpha-D-Glc-(1-&gt;3)-alpha-D-Man-(1-&gt;2)-alpha-D-Man-(1-&gt;2)-alpha-D-Man-(1-&gt;3)-[alpha-D-Man-(1-&gt;2)-alpha-D-Man-(1-&gt;3)-[alpha-D-Man-(1-&gt;2)-alpha-D-Man-(1-&gt;6)]-alpha-D-Man-(1-&gt;6)]-beta-D-Man-(1-&gt;4)-beta-D-GlcNAc-(1-&gt;4)-beta-D-GlcNAc)-L-asparaginyl-[protein] + beta-D-glucose. It participates in glycan metabolism; N-glycan metabolism. Functionally, catalytic subunit of glucosidase 2, which cleaves sequentially the 2 innermost alpha-1,3-linked glucose residues from the Glc(2)Man(9)GlcNAc(2) oligosaccharide precursor of immature glycoproteins. The chain is Glucosidase 2 subunit alpha from Schizosaccharomyces pombe (strain 972 / ATCC 24843) (Fission yeast).